Here is a 368-residue protein sequence, read N- to C-terminus: MWPLWRLVSLLALSQALPFEQRGFWDFTLDDGPFMMNDEEASGADTSGVLDPDSVTPTYSAMCPFGCHCHLRVVQCSDLGLKSVPKEISPDTTLLDLQNNDISELRKDDFKGLQHLYALVLVNNKISKIHEKAFSPLRKLQKLYISKNHLVEIPPNLPSSLVELRIHDNRIRKVPKGVFSGLRNMNCIEMGGNPLENSGFEPGAFDGLKLNYLRISEAKLTGIPKDLPETLNELHLDHNKIQAIELEDLLRYSKLYRLGLGHNQIRMIENGSLSFLPTLRELHLDNNKLARVPSGLPDLKLLQVVYLHSNNITKVGVNDFCPMGFGVKRAYYNGISLFNNPVPYWEVQPATFRCVTDRLAIQFGNYKK.

A signal peptide spans 1–16 (MWPLWRLVSLLALSQA). Residues 17-37 (LPFEQRGFWDFTLDDGPFMMN) constitute a propeptide that is removed on maturation. Residues Ser-42 and Ser-47 are each glycosylated (O-linked (Xyl...) (glycosaminoglycan) serine). Disulfide bonds link Cys-63–Cys-69 and Cys-67–Cys-76. 12 LRR repeats span residues 82-102 (KSVP…NNDI), 103-126 (SELR…NNKI), 127-150 (SKIH…KNHL), 151-171 (VEIP…DNRI), 172-195 (RKVP…GNPL), 196-220 (ENSG…EAKL), 221-241 (TGIP…HNKI), 242-265 (QAIE…HNQI), 266-289 (RMIE…NNKL), 290-312 (ARVP…SNNI), 313-342 (TKVG…NNPV), and 343-368 (PYWE…NYKK). Residues Ser-180 and Ser-198 are each glycosylated (O-linked (Xyl...) (glycosaminoglycan) serine). Asn-270 and Asn-311 each carry an N-linked (GlcNAc...) asparagine glycan. A disulfide bridge connects residues Cys-321 and Cys-354.

The protein belongs to the small leucine-rich proteoglycan (SLRP) family. SLRP class I subfamily. In terms of assembly, homodimer. Forms a ternary complex with MFAP2 and ELN. The two attached glycosaminoglycan chains can be either chondroitin sulfate or dermatan sulfate. As to expression, detected in placenta (at protein level). Found in several connective tissues, especially in articular cartilages.

It is found in the secreted. It localises to the extracellular space. The protein localises to the extracellular matrix. In terms of biological role, may be involved in collagen fiber assembly. In Homo sapiens (Human), this protein is Biglycan (BGN).